The following is a 73-amino-acid chain: Small ribosomal subunit protein bS18 (73 aa).

It belongs to the bacterial ribosomal protein bS18 family. Part of the 30S ribosomal subunit. Forms a tight heterodimer with protein bS6.

Binds as a heterodimer with protein bS6 to the central domain of the 16S rRNA, where it helps stabilize the platform of the 30S subunit. The sequence is that of Small ribosomal subunit protein bS18 from Synechococcus sp. (strain RCC307).